Reading from the N-terminus, the 183-residue chain is Capsid protein (183 aa).

The interval 136–183 (NAPILSTLPETTVVRRRGRSPRRRTPSPRRRRSQSPRRRRSQSRESQC) is disordered. Residues 149-176 (VRRRGRSPRRRTPSPRRRRSQSPRRRRS) are compositionally biased toward basic residues. Ser-155, Ser-162, and Ser-170 each carry phosphoserine; by host. The 1; half-length repeat unit spans residues 155-161 (SPRRRTP). The interval 155–177 (SPRRRTPSPRRRRSQSPRRRRSQ) is 3 X 8 AA repeats of S-P-R-R-R-[PR]-S-Q. The Bipartite nuclear localization signal motif lies at 158–175 (RRTPSPRRRRSQSPRRRR). A run of 2 repeats spans residues 162 to 169 (SPRRRRSQ) and 170 to 177 (SPRRRRSQ). Residues 177 to 183 (QSRESQC) are RNA binding.

It belongs to the orthohepadnavirus core antigen family. As to quaternary structure, homodimerizes, then multimerizes. Interacts with cytosol exposed regions of viral L glycoprotein present in the reticulum-to-Golgi compartment. Interacts with human FLNB. Phosphorylated form interacts with host importin alpha; this interaction depends on the exposure of the NLS, which itself depends upon genome maturation and/or phosphorylation of the capsid protein. Interacts with host NUP153. Phosphorylated by host SRPK1, SRPK2, and maybe protein kinase C or GAPDH. Phosphorylation is critical for pregenomic RNA packaging. Protein kinase C phosphorylation is stimulated by HBx protein and may play a role in transport of the viral genome to the nucleus at the late step during the viral replication cycle.

The protein resides in the virion. It is found in the host cytoplasm. In terms of biological role, self assembles to form an icosahedral capsid. Most capsids appear to be large particles with an icosahedral symmetry of T=4 and consist of 240 copies of capsid protein, though a fraction forms smaller T=3 particles consisting of 180 capsid proteins. Entering capsids are transported along microtubules to the nucleus. Phosphorylation of the capsid is thought to induce exposure of nuclear localization signal in the C-terminal portion of the capsid protein that allows binding to the nuclear pore complex via the importin (karyopherin-) alpha and beta. Capsids are imported in intact form through the nuclear pore into the nuclear basket, where it probably binds NUP153. Only capsids that contain the mature viral genome can release the viral DNA and capsid protein into the nucleoplasm. Immature capsids get stuck in the basket. Capsids encapsulate the pre-genomic RNA and the P protein. Pre-genomic RNA is reverse-transcribed into DNA while the capsid is still in the cytoplasm. The capsid can then either be directed to the nucleus, providing more genomes for transcription, or bud through the endoplasmic reticulum to provide new virions. This is Capsid protein from Homo sapiens (Human).